A 314-amino-acid chain; its full sequence is tRNA dimethylallyltransferase (314 aa).

16–23 is a binding site for ATP; it reads GPTGVGKT. Residue 18 to 23 participates in substrate binding; sequence TGVGKT. The segment at 41 to 44 is interaction with substrate tRNA; it reads DSMQ.

Belongs to the IPP transferase family. In terms of assembly, monomer. It depends on Mg(2+) as a cofactor.

The enzyme catalyses adenosine(37) in tRNA + dimethylallyl diphosphate = N(6)-dimethylallyladenosine(37) in tRNA + diphosphate. In terms of biological role, catalyzes the transfer of a dimethylallyl group onto the adenine at position 37 in tRNAs that read codons beginning with uridine, leading to the formation of N6-(dimethylallyl)adenosine (i(6)A). The sequence is that of tRNA dimethylallyltransferase from Desulfosudis oleivorans (strain DSM 6200 / JCM 39069 / Hxd3) (Desulfococcus oleovorans).